The primary structure comprises 314 residues: 2-dehydro-3-deoxygluconokinase (314 aa).

Substrate is bound by residues Gly28 to Asn32, Tyr88, Tyr102 to Arg104, and Arg170. Residues Asn168–Arg170, Lys228–Gly233, and Ser260–Asp263 contribute to the ATP site. Asp263 contributes to the substrate binding site. Catalysis depends on Asp263, which acts as the Proton acceptor.

This sequence belongs to the carbohydrate kinase PfkB family.

The catalysed reaction is 2-dehydro-3-deoxy-D-gluconate + ATP = 2-dehydro-3-deoxy-6-phospho-D-gluconate + ADP + H(+). It functions in the pathway carbohydrate acid metabolism; 2-dehydro-3-deoxy-D-gluconate degradation; D-glyceraldehyde 3-phosphate and pyruvate from 2-dehydro-3-deoxy-D-gluconate: step 1/2. In terms of biological role, catalyzes the phosphorylation of 2-keto-3-deoxygluconate (KDG) to produce 2-keto-3-deoxy-6-phosphogluconate (KDPG). This Haemophilus influenzae (strain ATCC 51907 / DSM 11121 / KW20 / Rd) protein is 2-dehydro-3-deoxygluconokinase (kdgK).